Reading from the N-terminus, the 203-residue chain is MKNMCSNWWLSEHYSDKFVKESKKCKYRSRAWFKIDEIQKKNNIIKPGMVVLDIGSSPGGWSKYSSQKVGMSGKVIACDIDLMNPIPNVSFILGNIFEKITIKKIKKVKKKVHIILCDISPNITGLSIIDHSRWISLNNNILNICKYLLLKNGKLIIKSFNSVEIKNFCKKIENSFKKIKIFKPISSRSRSKEIYIVAVNYKL.

Residues Gly59, Trp61, Asp79, Asn95, and Asp118 each coordinate S-adenosyl-L-methionine. The active-site Proton acceptor is Lys158.

Belongs to the class I-like SAM-binding methyltransferase superfamily. RNA methyltransferase RlmE family.

It localises to the cytoplasm. It carries out the reaction uridine(2552) in 23S rRNA + S-adenosyl-L-methionine = 2'-O-methyluridine(2552) in 23S rRNA + S-adenosyl-L-homocysteine + H(+). Functionally, specifically methylates the uridine in position 2552 of 23S rRNA at the 2'-O position of the ribose in the fully assembled 50S ribosomal subunit. The polypeptide is Ribosomal RNA large subunit methyltransferase E (Wigglesworthia glossinidia brevipalpis).